Here is a 484-residue protein sequence, read N- to C-terminus: Glutamate--tRNA ligase (484 aa).

A 'HIGH' region motif is present at residues proline 11–asparagine 21. Residues lysine 252 to arginine 256 carry the 'KMSKS' region motif. Residue lysine 255 participates in ATP binding.

This sequence belongs to the class-I aminoacyl-tRNA synthetase family. Glutamate--tRNA ligase type 1 subfamily. Monomer.

Its subcellular location is the cytoplasm. The catalysed reaction is tRNA(Glu) + L-glutamate + ATP = L-glutamyl-tRNA(Glu) + AMP + diphosphate. Functionally, catalyzes the attachment of glutamate to tRNA(Glu) in a two-step reaction: glutamate is first activated by ATP to form Glu-AMP and then transferred to the acceptor end of tRNA(Glu). This is Glutamate--tRNA ligase from Staphylococcus aureus (strain MRSA252).